The sequence spans 52 residues: Ornatin-B (52 aa).

The short motif at 42 to 44 (RGD) is the Cell attachment site element.

It belongs to the ornatin family.

It is found in the secreted. Functionally, potent inhibitor of fibrinogen interaction with platelet receptors expressed on glycoprotein IIb-IIIa complex. May prevent blood from clotting during either feeding and/or storage of ingested blood. This chain is Ornatin-B, found in Placobdella ornata (Turtle leech).